The chain runs to 369 residues: Velvet complex subunit B (369 aa).

3 disordered regions span residues 1-54 (MYAV…STVH), 138-174 (SISTAMSSSYPPPPHPTSSDYPASYQTNPYGQPVGQP), and 346-369 (KDGVKGQGSRGRHSDEDDGLDNEY). Over residues 13–27 (HPPPLSMDRIPPPST) the composition is skewed to pro residues. The 293-residue stretch at 53 to 345 (VHDGRIWSLQ…ANQGIKIPIR (293 aa)) folds into the Velvet domain.

Belongs to the velvet family. VelB subfamily. Component of the heterotrimeric velvet complex composed of laeA, veA and velB; VeA acting as a bridging protein between laeA and velB. Interacts directly with veA. Forms a heterodimeric complex with vosA; the formation of the velB-vosA complex is light-dependent.

It localises to the nucleus. It is found in the cytoplasm. Its function is as follows. Component of the velvet transcription factor complex that controls sexual/asexual developmental ratio in response to light, promoting sexual development in the darkness while stimulating asexual sporulation under illumination. The velvet complex acts as a global regulator for secondary metabolite gene expression. Component of the velB-VosA heterodimeric complex that plays a dual role in activating genes associated with spore maturation and repressing certain development-associated genes. The velB-VosA complex binds DNA through the DNA-binding domain of vosA that recognizes an 11-nucleotide consensus sequence 5'-CTGGCCGCGGC-3' consisting of two motifs in the promoters of key developmental regulatory genes. The vosA-velB complex binds to the beta-glucan synthase fksA gene promoter in asexual spores for repression. The chain is Velvet complex subunit B from Emericella nidulans (strain FGSC A4 / ATCC 38163 / CBS 112.46 / NRRL 194 / M139) (Aspergillus nidulans).